Consider the following 103-residue polypeptide: Large ribosomal subunit protein uL24 (103 aa).

It belongs to the universal ribosomal protein uL24 family. As to quaternary structure, part of the 50S ribosomal subunit.

Functionally, one of two assembly initiator proteins, it binds directly to the 5'-end of the 23S rRNA, where it nucleates assembly of the 50S subunit. Its function is as follows. One of the proteins that surrounds the polypeptide exit tunnel on the outside of the subunit. The polypeptide is Large ribosomal subunit protein uL24 (Actinobacillus succinogenes (strain ATCC 55618 / DSM 22257 / CCUG 43843 / 130Z)).